The primary structure comprises 522 residues: Protein tweety homolog 3 (522 aa).

The Extracellular segment spans residues 1–43 (MAAAISYTPPWWVNLLHRLPHLNLQWESLNGDFRPEDPDYQQS). A helical membrane pass occupies residues 44–64 (LMLLACVALSCLALDLLFLLF). At 65–87 (YSFWFCCRHRKTEENTNADCCCT) the chain is on the cytoplasmic side. A helical transmembrane segment spans residues 88-108 (VWCVIVATLVCSAGIAVGFYG). The Extracellular segment spans residues 109–211 (NGETSDGIHR…VDLFDWYRWL (103 aa)). The Ca(2+) site is built by glutamate 111 and aspartate 114. N-linked (GlcNAc...) asparagine glycosylation is found at asparagine 127 and asparagine 145. Residues 212 to 232 (GYLGLLLFHVFICLLVLFGLI) traverse the membrane as a helical segment. Residues 233 to 238 (RNSKGT) lie on the Cytoplasmic side of the membrane. A helical transmembrane segment spans residues 239–259 (LICVCFLGMMALIISWASMGL). The Extracellular segment spans residues 260-386 (ELAVAVGSSD…LTGFCYDGVE (127 aa)). 2 disulfide bridges follow: cysteine 271–cysteine 381 and cysteine 299–cysteine 366. N-linked (GlcNAc...) asparagine glycosylation occurs at asparagine 351. The helical transmembrane segment at 387–407 (GLIYLVLFSFVTALMFSSIVC) threads the bilayer. The Cytoplasmic segment spans residues 408-522 (SVPHTWQQRR…TNRPETDPVH (115 aa)). Residues 483-522 (QNPRCENTPLIGRESPPPSYTSSMRAKYLATNRPETDPVH) form a disordered region.

The protein belongs to the tweety family. Homotetramer; disulfide-linked. Forms cis-homodimers in the presence of Ca(2+).

The protein localises to the cell membrane. The enzyme catalyses chloride(in) = chloride(out). It carries out the reaction L-glutamate(out) = L-glutamate(in). May act as a calcium-independent, swelling-dependent volume-regulated anion channel (VRAC-swell) which plays a pivotal role in the process of regulatory volume decrease (RVD) in the brain through the efflux of anions like chloride and organic osmolytes like glutamate. Probable large-conductance Ca(2+)-activated chloride channel. This Xenopus laevis (African clawed frog) protein is Protein tweety homolog 3 (ttyh3).